A 670-amino-acid chain; its full sequence is DNA-binding transcriptional activator HyfR (670 aa).

The GAF domain maps to 169 to 311; it reads DLDDLIADVA…HIADRIAIAV (143 aa). The Cys-rich segment, might bind a metal cluster signature appears at 207–221; sequence CSDLSASHCACLPRC. The region spanning 347-576 is the Sigma-54 factor interaction domain; sequence IIYQSQAMED…LENVIERAVL (230 aa). Residues 375 to 382 and 438 to 447 contribute to the ATP site; these read GETGTGKE and ADGGTLFLDE. Residues 641 to 660 constitute a DNA-binding region (H-T-H motif); it reads PRGAATRLGMKRTTLLSRMQ.

In terms of biological role, a transcriptional activator of its own operon; when overexpressed operon expression is strongly enhanced by low pH (under pH 6.0), strongly inhibited by O(2) but only weakly stimulated by fumarate. Expression in situ is very weak. This Escherichia coli (strain K12) protein is DNA-binding transcriptional activator HyfR.